Reading from the N-terminus, the 338-residue chain is Isopentenyl-diphosphate delta-isomerase (338 aa).

13–14 is a substrate binding site; that stretch reads RK. Residues 72–74, Ser102, and Asn130 contribute to the FMN site; that span reads AMT. Residue 102–104 coordinates substrate; sequence SQR. Gln165 contacts substrate. Glu166 contacts Mg(2+). Residues Lys197, Thr227, 274–276, and 295–296 each bind FMN; these read GIR and AR.

Belongs to the IPP isomerase type 2 family. As to quaternary structure, homooctamer. Dimer of tetramers. FMN serves as cofactor. NADPH is required as a cofactor. It depends on Mg(2+) as a cofactor.

Its subcellular location is the cytoplasm. It carries out the reaction isopentenyl diphosphate = dimethylallyl diphosphate. In terms of biological role, involved in the biosynthesis of isoprenoids. Catalyzes the 1,3-allylic rearrangement of the homoallylic substrate isopentenyl (IPP) to its allylic isomer, dimethylallyl diphosphate (DMAPP). This Deinococcus radiodurans (strain ATCC 13939 / DSM 20539 / JCM 16871 / CCUG 27074 / LMG 4051 / NBRC 15346 / NCIMB 9279 / VKM B-1422 / R1) protein is Isopentenyl-diphosphate delta-isomerase.